A 375-amino-acid chain; its full sequence is Carbamoyl phosphate synthase small chain (375 aa).

Residues 1-186 (MKAILALEDG…IVDGTYAWPG (186 aa)) form a CPSase region. L-glutamine contacts are provided by S45, G238, and G240. Residues 190-375 (RLVVFDMGIK…RNLVRKETGK (186 aa)) enclose the Glutamine amidotransferase type-1 domain. The Nucleophile role is filled by C265. The L-glutamine site is built by L266, Q269, N307, G309, and F310. Catalysis depends on residues H348 and E350.

The protein belongs to the CarA family. In terms of assembly, composed of two chains; the small (or glutamine) chain promotes the hydrolysis of glutamine to ammonia, which is used by the large (or ammonia) chain to synthesize carbamoyl phosphate. Tetramer of heterodimers (alpha,beta)4.

It catalyses the reaction hydrogencarbonate + L-glutamine + 2 ATP + H2O = carbamoyl phosphate + L-glutamate + 2 ADP + phosphate + 2 H(+). It carries out the reaction L-glutamine + H2O = L-glutamate + NH4(+). Its pathway is amino-acid biosynthesis; L-arginine biosynthesis; carbamoyl phosphate from bicarbonate: step 1/1. It functions in the pathway pyrimidine metabolism; UMP biosynthesis via de novo pathway; (S)-dihydroorotate from bicarbonate: step 1/3. Its function is as follows. Small subunit of the glutamine-dependent carbamoyl phosphate synthetase (CPSase). CPSase catalyzes the formation of carbamoyl phosphate from the ammonia moiety of glutamine, carbonate, and phosphate donated by ATP, constituting the first step of 2 biosynthetic pathways, one leading to arginine and/or urea and the other to pyrimidine nucleotides. The small subunit (glutamine amidotransferase) binds and cleaves glutamine to supply the large subunit with the substrate ammonia. The sequence is that of Carbamoyl phosphate synthase small chain from Solidesulfovibrio magneticus (strain ATCC 700980 / DSM 13731 / RS-1) (Desulfovibrio magneticus).